Reading from the N-terminus, the 1879-residue chain is Protein TIC 214 (1879 aa).

The next 6 membrane-spanning stretches (helical) occupy residues I18–G38, F67–L87, P90–H110, L127–L147, V175–I195, and I218–I238. The segment at L243–P291 is disordered. The segment covering D257 to Q271 has biased composition (basic and acidic residues).

The protein belongs to the TIC214 family. Part of the Tic complex.

Its subcellular location is the plastid. It is found in the chloroplast inner membrane. In terms of biological role, involved in protein precursor import into chloroplasts. May be part of an intermediate translocation complex acting as a protein-conducting channel at the inner envelope. This Morus indica (Mulberry) protein is Protein TIC 214.